The sequence spans 175 residues: Large ribosomal subunit protein uL16 (175 aa).

The protein belongs to the universal ribosomal protein uL16 family.

This is Large ribosomal subunit protein uL16 from Metallosphaera sedula (strain ATCC 51363 / DSM 5348 / JCM 9185 / NBRC 15509 / TH2).